The chain runs to 130 residues: 3-hydroxyisobutyrate dehydrogenase, mitochondrial (130 aa).

NAD(+) contacts are provided by residues 1 to 17, 25 to 26, and asparagine 30; these read TPVG…PMAK and LP. N6-acetyllysine is present on lysine 43. Lysine 47 is subject to N6-acetyllysine; alternate. Lysine 47 is modified (N6-succinyllysine; alternate). At lysine 101 the chain carries N6-succinyllysine.

The protein belongs to the HIBADH-related family. 3-hydroxyisobutyrate dehydrogenase subfamily. As to quaternary structure, homodimer.

It is found in the mitochondrion. It carries out the reaction 3-hydroxy-2-methylpropanoate + NAD(+) = 2-methyl-3-oxopropanoate + NADH + H(+). It functions in the pathway amino-acid degradation; L-valine degradation. The chain is 3-hydroxyisobutyrate dehydrogenase, mitochondrial from Mesocricetus auratus (Golden hamster).